The following is a 1890-amino-acid chain: Putative aminopeptidase-2 (1890 aa).

Positions 1–20 (MRRKLLLLLCFIGLFSLIST) are cleaved as a signal peptide. N-linked (GlcNAc...) asparagine glycosylation occurs at N110. Substrate contacts are provided by residues E220 and 354 to 358 (GAMEN). H390 provides a ligand contact to Zn(2+). E391 (proton acceptor) is an active-site residue. Residues H394 and E413 each coordinate Zn(2+). N-linked (GlcNAc...) asparagine glycans are attached at residues N534, N581, N785, N803, N914, N1024, and N1094. Residue E1143 coordinates substrate. A glycan (N-linked (GlcNAc...) asparagine) is linked at N1245. 1280-1284 (GAMEN) is a substrate binding site. H1316 lines the Zn(2+) pocket. Residue E1317 is the Proton acceptor of the active site. Zn(2+) contacts are provided by H1320 and E1339. N-linked (GlcNAc...) asparagine glycans are attached at residues N1451, N1521, N1826, and N1841.

It belongs to the peptidase M1 family. It depends on Zn(2+) as a cofactor.

Its function is as follows. Putative aminopeptidase which plays a role in oocyte maturation. This Caenorhabditis elegans protein is Putative aminopeptidase-2.